Here is a 914-residue protein sequence, read N- to C-terminus: UPF0182 protein Syncc9605_1323 (914 aa).

9 helical membrane passes run 4–24 (LLLL…WLWF), 37–57 (WLLQ…ARAW), 81–101 (IALL…LDLL), 123–143 (RIGS…MTWL), 152–172 (IVAA…SLAL), 195–215 (FAGL…TLVF), 240–260 (MRLI…LVWL), 285–305 (LPLR…LLLP), and 312–332 (QFLA…TPLT).

This sequence belongs to the UPF0182 family.

It is found in the cell membrane. This chain is UPF0182 protein Syncc9605_1323, found in Synechococcus sp. (strain CC9605).